The sequence spans 143 residues: uncharacterized protein (143 aa).

In terms of domain architecture, HTH marR-type spans 11–139; sequence EYELTTFIRR…FGELLQRMNK (129 aa). The segment at residues 53-76 is a DNA-binding region (H-T-H motif); it reads VKELAESFKLDISTLSRQAAALEA.

This is an uncharacterized protein from Bacillus subtilis (strain 168).